Consider the following 104-residue polypeptide: Fluoride-specific ion channel FluC 2 (104 aa).

3 helical membrane-spanning segments follow: residues 22–42 (IGPY…LAAV), 48–68 (LVMA…STLA), and 82–102 (MLLG…WCGL). Na(+) is bound by residues Gly59 and Ser62.

The protein belongs to the fluoride channel Fluc/FEX (TC 1.A.43) family.

It localises to the cell membrane. The catalysed reaction is fluoride(in) = fluoride(out). With respect to regulation, na(+) is not transported, but it plays an essential structural role and its presence is essential for fluoride channel function. Functionally, fluoride-specific ion channel. Important for reducing fluoride concentration in the cell, thus reducing its toxicity. This Corynebacterium diphtheriae (strain ATCC 700971 / NCTC 13129 / Biotype gravis) protein is Fluoride-specific ion channel FluC 2.